A 72-amino-acid chain; its full sequence is Translation initiation factor IF-1 (72 aa).

Residues 1–72 (MARDDVIEVD…DKGRITFRYK (72 aa)) form the S1-like domain.

Belongs to the IF-1 family. Component of the 30S ribosomal translation pre-initiation complex which assembles on the 30S ribosome in the order IF-2 and IF-3, IF-1 and N-formylmethionyl-tRNA(fMet); mRNA recruitment can occur at any time during PIC assembly.

It localises to the cytoplasm. Functionally, one of the essential components for the initiation of protein synthesis. Stabilizes the binding of IF-2 and IF-3 on the 30S subunit to which N-formylmethionyl-tRNA(fMet) subsequently binds. Helps modulate mRNA selection, yielding the 30S pre-initiation complex (PIC). Upon addition of the 50S ribosomal subunit IF-1, IF-2 and IF-3 are released leaving the mature 70S translation initiation complex. The protein is Translation initiation factor IF-1 of Helicobacter pylori (strain HPAG1).